Reading from the N-terminus, the 508-residue chain is Protein NODULATION SIGNALING PATHWAY 2 (508 aa).

Residues Ile75–Thr98 are disordered. Positions Val108 to Thr500 constitute a GRAS domain. Residues Leu115–Lys190 form a leucine repeat I (LRI) region. The VHIID stretch occupies residues Phe209–Ala273. A VHIID motif is present at residues Val240–Asp244. A leucine repeat II (LRII) region spans residues Glu289 to Ser321. Positions Leu331–Gly422 are PFYRE. The segment at Gly425 to Thr500 is SAW.

It belongs to the GRAS family. As to quaternary structure, interacts with RAM1. Interacts with IPN2 and RAD1. As to expression, expressed in roots, shoots and leaves.

It is found in the nucleus membrane. Its subcellular location is the endoplasmic reticulum. In terms of biological role, transcriptional regulator essential for Nod-factor-induced gene expression. Acts downstream of calcium spiking and DMI3, a calcium/calmodulin-dependent protein kinase (CCaMK). Transcription factor involved in the control of strigolactone biosynthesis in roots through the activation of the beta-carotene isomerase D27, which participates in a pathway leading to biosynthesis of strigolactones. The sequence is that of Protein NODULATION SIGNALING PATHWAY 2 from Medicago truncatula (Barrel medic).